Here is a 197-residue protein sequence, read N- to C-terminus: Holliday junction branch migration complex subunit RuvA (197 aa).

A domain I region spans residues 1-64 (MIDSIVGTIQ…LSELECYGFL (64 aa)). The segment at 65-143 (TREERELFLK…KEFKVASTSG (79 aa)) is domain II. Residues 144–152 (TEEKTYEKL) form a flexible linker region. Residues 152-197 (LEEISLALLSLGYEIDEINQVLSSEDFSELSLEDGIKLALKKLSKI) are domain III.

It belongs to the RuvA family. Homotetramer. Forms an RuvA(8)-RuvB(12)-Holliday junction (HJ) complex. HJ DNA is sandwiched between 2 RuvA tetramers; dsDNA enters through RuvA and exits via RuvB. An RuvB hexamer assembles on each DNA strand where it exits the tetramer. Each RuvB hexamer is contacted by two RuvA subunits (via domain III) on 2 adjacent RuvB subunits; this complex drives branch migration. In the full resolvosome a probable DNA-RuvA(4)-RuvB(12)-RuvC(2) complex forms which resolves the HJ.

Its subcellular location is the cytoplasm. Its function is as follows. The RuvA-RuvB-RuvC complex processes Holliday junction (HJ) DNA during genetic recombination and DNA repair, while the RuvA-RuvB complex plays an important role in the rescue of blocked DNA replication forks via replication fork reversal (RFR). RuvA specifically binds to HJ cruciform DNA, conferring on it an open structure. The RuvB hexamer acts as an ATP-dependent pump, pulling dsDNA into and through the RuvAB complex. HJ branch migration allows RuvC to scan DNA until it finds its consensus sequence, where it cleaves and resolves the cruciform DNA. The protein is Holliday junction branch migration complex subunit RuvA of Caldicellulosiruptor saccharolyticus (strain ATCC 43494 / DSM 8903 / Tp8T 6331).